Reading from the N-terminus, the 360-residue chain is D-xylose 1-dehydrogenase [NADP(+)] (360 aa).

It belongs to the Gfo/Idh/MocA family. Homotretramer.

The catalysed reaction is D-xylofuranose + NADP(+) = D-xylono-1,4-lactone + NADPH + H(+). Functionally, NADP-dependent D-xylose dehydrogenase involved in the degradation of D-xylose, a major component of hemicelluloses such as xylan. In addition to D-xylose, oxidizes D-ribose at similar kinetic constants, whereas D-glucose is oxidized with about 70-fold lower catalytic efficiency. The protein is D-xylose 1-dehydrogenase [NADP(+)] (gfo6) of Haloarcula marismortui (strain ATCC 43049 / DSM 3752 / JCM 8966 / VKM B-1809) (Halobacterium marismortui).